A 208-amino-acid chain; its full sequence is 3-demethoxyubiquinol 3-hydroxylase (208 aa).

Fe cation contacts are provided by Glu57, Glu87, His90, Glu139, Glu171, and His174.

Belongs to the COQ7 family. Requires Fe cation as cofactor.

The protein localises to the cell membrane. The enzyme catalyses a 5-methoxy-2-methyl-3-(all-trans-polyprenyl)benzene-1,4-diol + AH2 + O2 = a 3-demethylubiquinol + A + H2O. It participates in cofactor biosynthesis; ubiquinone biosynthesis. Its function is as follows. Catalyzes the hydroxylation of 2-nonaprenyl-3-methyl-6-methoxy-1,4-benzoquinol during ubiquinone biosynthesis. The polypeptide is 3-demethoxyubiquinol 3-hydroxylase (Burkholderia pseudomallei (strain 1106a)).